A 223-amino-acid polypeptide reads, in one-letter code: uncharacterized protein (223 aa).

The interval 1–30 (MASATVRNVPLLDDDTIPFGEEDEMRDPSR) is disordered. The segment covering 12–25 (LDDDTIPFGEEDEM) has biased composition (acidic residues). Helical transmembrane passes span 35 to 55 (YTHPYVTFFHLFFRGAAILIY), 56 to 76 (MFCGWFSDSFITSFVFVVLFL), 129 to 149 (IFWLGLILCPVFWGLFFLFAL), and 154 to 174 (FKWLLLVMIAIALNAANLYGY).

This sequence belongs to the TVP23 family.

The protein localises to the membrane. This is an uncharacterized protein from Drosophila melanogaster (Fruit fly).